The primary structure comprises 972 residues: Glycine dehydrogenase (decarboxylating) (972 aa).

Lysine 713 bears the N6-(pyridoxal phosphate)lysine mark.

It belongs to the GcvP family. In terms of assembly, the glycine cleavage system is composed of four proteins: P, T, L and H. Pyridoxal 5'-phosphate serves as cofactor.

The enzyme catalyses N(6)-[(R)-lipoyl]-L-lysyl-[glycine-cleavage complex H protein] + glycine + H(+) = N(6)-[(R)-S(8)-aminomethyldihydrolipoyl]-L-lysyl-[glycine-cleavage complex H protein] + CO2. The glycine cleavage system catalyzes the degradation of glycine. The P protein binds the alpha-amino group of glycine through its pyridoxal phosphate cofactor; CO(2) is released and the remaining methylamine moiety is then transferred to the lipoamide cofactor of the H protein. This is Glycine dehydrogenase (decarboxylating) from Aromatoleum aromaticum (strain DSM 19018 / LMG 30748 / EbN1) (Azoarcus sp. (strain EbN1)).